We begin with the raw amino-acid sequence, 687 residues long: Outer dynein arm-docking complex subunit 1 (687 aa).

3 coiled-coil regions span residues 100-193 (QVRV…YLNV), 222-267 (REEA…LKLK), and 341-421 (INEQ…LFTR). Residues 126-147 (SRNSAHSKNARSPGCVQHDKVK) form a disordered region. Disordered stretches follow at residues 363–388 (VSGR…QRVD), 487–511 (FPKK…AKDD), and 540–687 (ESTP…QSNY). A compositionally biased stretch (basic and acidic residues) spans 366–388 (RRSEEDRRAQQEQQRAELQQRVD). A compositionally biased stretch (low complexity) spans 544 to 556 (SMTSSTQKVSSSS). Polar residues-rich tracts occupy residues 557-611 (RLVT…SSRG) and 620-629 (RSPNSSSYLG). Over residues 660–680 (SPGPASSPGPASSTGQASSTS) the composition is skewed to low complexity.

This sequence belongs to the ODA1/DCC2 family. In terms of assembly, component of the outer dynein arm-docking complex along with ODAD2, ODAD3, ODAD4 and CLXN. Interacts with ODAD3. Interacts with ODAD4; this interaction may facilitate the recruitment and/or attachment of outer dynein arm docking complex proteins, including ODAD1, ODAD3, and ODAD4 to ciliary axonemes. Interacts with DNAH9. Interacts with MNS1. Interacts with PIERCE1 and PIERCE2; the interactions link the outer dynein arms docking complex (ODA-DC) to the internal microtubule inner proteins (MIP) in cilium axoneme. Expressed in trachea multiciliated cells.

Its subcellular location is the cytoplasm. The protein resides in the cytoskeleton. It is found in the cilium axoneme. In terms of biological role, component of the outer dynein arm-docking complex (ODA-DC) that mediates outer dynein arms (ODA) binding onto the doublet microtubule. Involved in mediating assembly of both ODAs and their axonemal docking complex onto ciliary microtubules. In Bos taurus (Bovine), this protein is Outer dynein arm-docking complex subunit 1 (ODAD1).